A 669-amino-acid chain; its full sequence is Galactocerebrosidase (669 aa).

A signal peptide spans 1-26 (MTAAAGSAGHAAVPLLLCALLVPGGA). 3 residues coordinate substrate: Thr-93, Trp-135, and Asn-181. Glu-182 acts as the Proton donor/acceptor in catalysis. Glu-258 functions as the Nucleophile in the catalytic mechanism. Cys-271 and Cys-378 form a disulfide bridge. Asn-363 is a glycosylation site (N-linked (GlcNAc...) asparagine). Arg-380 is a substrate binding site. N-linked (GlcNAc...) asparagine glycosylation is found at Asn-387, Asn-543, and Asn-586.

This sequence belongs to the glycosyl hydrolase 59 family.

The protein localises to the lysosome. It catalyses the reaction a beta-D-galactosyl-(1&lt;-&gt;1')-N-acylsphing-4-enine + H2O = an N-acylsphing-4-enine + D-galactose. It carries out the reaction beta-D-galactosyl-(1&lt;-&gt;1)-sphing-4-enine + H2O = sphing-4-enine + D-galactose. The enzyme catalyses a D-galactosylceramide + H2O = an N-acyl-sphingoid base + D-galactose. In terms of biological role, hydrolyzes the galactose ester bonds of glycolipids such as galactosylceramide and galactosylsphingosine. Enzyme with very low activity responsible for the lysosomal catabolism of galactosylceramide, a major lipid in myelin, kidney and epithelial cells of small intestine and colon. The protein is Galactocerebrosidase of Canis lupus familiaris (Dog).